The following is a 586-amino-acid chain: Arginine--tRNA ligase (586 aa).

The short motif at 128–138 is the 'HIGH' region element; the sequence is ANPTGPLHVGH.

This sequence belongs to the class-I aminoacyl-tRNA synthetase family. Monomer.

The protein localises to the cytoplasm. The enzyme catalyses tRNA(Arg) + L-arginine + ATP = L-arginyl-tRNA(Arg) + AMP + diphosphate. This chain is Arginine--tRNA ligase, found in Coxiella burnetii (strain RSA 331 / Henzerling II).